The primary structure comprises 264 residues: Virulence plasmid ParA family protein pGP5-D (264 aa).

9 to 16 (FKGGTGKT) lines the ATP pocket.

This sequence belongs to the ParA family.

Required for growth within mammalian cells. In Chlamydia trachomatis, this protein is Virulence plasmid ParA family protein pGP5-D.